A 537-amino-acid chain; its full sequence is Hexahomomethionine N-hydroxylase (537 aa).

The helical transmembrane segment at 7–27 threads the bilayer; the sequence is FNTCFQILLGFIVFIASITLL.

The protein belongs to the cytochrome P450 family. The cofactor is heme. Highly expressed in hypocotyl and roots. Lower expression in siliques, stems and leaves. Barely detectable in flowers. Expressed only in the vascular bundles in apical plant parts.

It is found in the endoplasmic reticulum membrane. It carries out the reaction L-hexahomomethionine + 2 reduced [NADPH--hemoprotein reductase] + 2 O2 = (E)-9-(methylsulfanyl)nonanal oxime + 2 oxidized [NADPH--hemoprotein reductase] + CO2 + 3 H2O + 2 H(+). It catalyses the reaction L-pentahomomethionine + 2 reduced [NADPH--hemoprotein reductase] + 2 O2 = (E)-8-(methylsulfanyl)octanal oxime + 2 oxidized [NADPH--hemoprotein reductase] + CO2 + 3 H2O + 2 H(+). The catalysed reaction is an L-polyhomomethionine + 2 reduced [NADPH--hemoprotein reductase] + 2 O2 = an (E)-omega-(methylsulfanyl)-alkanal oxime + 2 oxidized [NADPH--hemoprotein reductase] + CO2 + 3 H2O + 2 H(+). Its function is as follows. Catalyzes the conversion of the long chain elongated methionines penta- and hexahomomethionine to their corresponding aldoximes 8-methylthiooctanaldoxime and 9-methylthiononanaldoxime. The polypeptide is Hexahomomethionine N-hydroxylase (CYP79F2) (Arabidopsis thaliana (Mouse-ear cress)).